The sequence spans 302 residues: tRNA dimethylallyltransferase (302 aa).

2–9 contributes to the ATP binding site; the sequence is GPTACGKS. 4-9 contributes to the substrate binding site; it reads TACGKS. 2 interaction with substrate tRNA regions span residues 27 to 30 and 149 to 153; these read DSAL and QRLIR.

The protein belongs to the IPP transferase family. In terms of assembly, monomer. Mg(2+) is required as a cofactor.

It carries out the reaction adenosine(37) in tRNA + dimethylallyl diphosphate = N(6)-dimethylallyladenosine(37) in tRNA + diphosphate. In terms of biological role, catalyzes the transfer of a dimethylallyl group onto the adenine at position 37 in tRNAs that read codons beginning with uridine, leading to the formation of N6-(dimethylallyl)adenosine (i(6)A). The protein is tRNA dimethylallyltransferase of Buchnera aphidicola subsp. Acyrthosiphon pisum (strain 5A).